The sequence spans 538 residues: MTDLNQLTQELGALGIHDVQEVVYNPSYELLFAEETKPGLEGYEKGTVTNQGAVAVNTGIFTGRSPKDKYIVLDDKTKDTVWWTSEKVKNDNKPMSQDTWNSLKGLVADQLSGKRLFVVDAFCGANKDTRLAVRVVTEVAWQAHFVTNMFIRPSAEELKGFKPDFVVMNGAKCTNPNWKEQGLNSENFVAFNITEGVQLIGGTWYGGEMKKGMFSMMNYFLPLRGIASMHCSANVGKDGDTAIFFGLSGTGKTTLSTDPKRQLIGDDEHGWDDEGVFNFEGGCYAKTINLSAENEPDIYGAIKRDALLENVVVLDNGDVDYADGSKTENTRVSYPIYHIQNIVKPVSKAGPATKVIFLSADAFGVLPPVSKLTPEQTKYYFLSGFTAKLAGTERGITEPTPTFSACFGAAFLSLHPTQYAEVLVKRMQESGAEAYLVNTGWNGTGKRISIKDTRGIIDAILDGSIDKAEMGSLPIFDFSIPKALPGVNPAILDPRDTYADKAQWEEKAQDLAGRFVKNFEKYTGTAEGQALVAAGPKA.

Substrate-binding residues include arginine 64, tyrosine 205, and lysine 211. Residues lysine 211, histidine 230, and 246–254 (GLSGTGKTT) each bind ATP. 2 residues coordinate Mn(2+): lysine 211 and histidine 230. Residue aspartate 267 participates in Mn(2+) binding. ATP is bound by residues glutamate 295, arginine 331, 447-448 (RI), and threonine 453. Arginine 331 contributes to the substrate binding site.

It belongs to the phosphoenolpyruvate carboxykinase (ATP) family. Monomer. The cofactor is Mn(2+).

It is found in the cytoplasm. It catalyses the reaction oxaloacetate + ATP = phosphoenolpyruvate + ADP + CO2. Its pathway is carbohydrate biosynthesis; gluconeogenesis. Functionally, involved in the gluconeogenesis. Catalyzes the conversion of oxaloacetate (OAA) to phosphoenolpyruvate (PEP) through direct phosphoryl transfer between the nucleoside triphosphate and OAA. This is Phosphoenolpyruvate carboxykinase (ATP) from Mannheimia succiniciproducens (strain KCTC 0769BP / MBEL55E).